Consider the following 407-residue polypeptide: Na(+)-translocating NADH-quinone reductase subunit F (407 aa).

The chain crosses the membrane as a helical span at residues I3–F23. Positions G32–I126 constitute a 2Fe-2S ferredoxin-type domain. C69, C75, C78, and C110 together coordinate [2Fe-2S] cluster. The FAD-binding FR-type domain occupies V129–K269.

The protein belongs to the NqrF family. Composed of six subunits; NqrA, NqrB, NqrC, NqrD, NqrE and NqrF. Requires [2Fe-2S] cluster as cofactor. It depends on FAD as a cofactor.

The protein resides in the cell inner membrane. The enzyme catalyses a ubiquinone + n Na(+)(in) + NADH + H(+) = a ubiquinol + n Na(+)(out) + NAD(+). Functionally, NQR complex catalyzes the reduction of ubiquinone-1 to ubiquinol by two successive reactions, coupled with the transport of Na(+) ions from the cytoplasm to the periplasm. The first step is catalyzed by NqrF, which accepts electrons from NADH and reduces ubiquinone-1 to ubisemiquinone by a one-electron transfer pathway. This is Na(+)-translocating NADH-quinone reductase subunit F from Serratia proteamaculans (strain 568).